The primary structure comprises 244 residues: Mediator of RNA polymerase II transcription subunit 19 (244 aa).

2 disordered regions span residues 1-67 (MENF…PFYL) and 171-244 (PKKK…SSLR). Positions 26–38 (GKPPPPPPPPPGG) are enriched in pro residues. The span at 44–55 (PPSTATSAPAGA) shows a compositional bias: low complexity. The segment covering 171–182 (PKKKNKHKHKQS) has biased composition (basic residues). Ser194 carries the phosphoserine modification. The span at 212 to 224 (KRKKKEKKKKKNR) shows a compositional bias: basic residues. At Ser226 the chain carries Phosphoserine. Low complexity predominate over residues 234–244 (SSQASSSSSLR).

Belongs to the Mediator complex subunit 19 family. Component of the Mediator complex, which is composed of MED1, MED4, MED6, MED7, MED8, MED9, MED10, MED11, MED12, MED13, MED13L, MED14, MED15, MED16, MED17, MED18, MED19, MED20, MED21, MED22, MED23, MED24, MED25, MED26, MED27, MED29, MED30, MED31, CCNC, CDK8 and CDC2L6/CDK11. The MED12, MED13, CCNC and CDK8 subunits form a distinct module termed the CDK8 module. Mediator containing the CDK8 module is less active than Mediator lacking this module in supporting transcriptional activation. Individual preparations of the Mediator complex lacking one or more distinct subunits have been variously termed ARC, CRSP, DRIP, PC2, SMCC and TRAP.

It localises to the nucleus. Functionally, component of the Mediator complex, a coactivator involved in the regulated transcription of nearly all RNA polymerase II-dependent genes. Mediator functions as a bridge to convey information from gene-specific regulatory proteins to the basal RNA polymerase II transcription machinery. Mediator is recruited to promoters by direct interactions with regulatory proteins and serves as a scaffold for the assembly of a functional preinitiation complex with RNA polymerase II and the general transcription factors. The chain is Mediator of RNA polymerase II transcription subunit 19 (Med19) from Mus musculus (Mouse).